Here is a 98-residue protein sequence, read N- to C-terminus: MAAMQWCGAMTRRIMMTQRTSAALNCSARYSSLSPACAAPAVSEMDLCGRGDKKTKKGKRFKGSYGNSRGKKQKMIERIKDKLELPRSTPWPLPFKLI.

The transit peptide at 1-35 directs the protein to the mitochondrion; it reads MAAMQWCGAMTRRIMMTQRTSAALNCSARYSSLSP. Residues 52–71 are disordered; it reads DKKTKKGKRFKGSYGNSRGK. A compositionally biased stretch (basic residues) spans 53–62; sequence KKTKKGKRFK.

This sequence belongs to the bacterial ribosomal protein bTHX family. Component of the mitochondrial ribosome small subunit.

The protein localises to the mitochondrion. The sequence is that of Small ribosomal subunit protein bTHXm from Arabidopsis thaliana (Mouse-ear cress).